The primary structure comprises 176 residues: NAD(P)H-quinone oxidoreductase subunit 6, chloroplastic (176 aa).

5 consecutive transmembrane segments (helical) span residues 10–30 (FLLVFLGSGLILGGLGVVLLP), 32–52 (PIYSAFSLGLVLVCTSLFYIL), 61–81 (AQLLIYVGAINVLIIFAVMFM), 92–112 (LWTVGDGITSMVCISLFISLI), and 152–172 (FFLPFELISIILLVALIGAIA).

It belongs to the complex I subunit 6 family. NDH is composed of at least 16 different subunits, 5 of which are encoded in the nucleus.

It localises to the plastid. Its subcellular location is the chloroplast thylakoid membrane. It carries out the reaction a plastoquinone + NADH + (n+1) H(+)(in) = a plastoquinol + NAD(+) + n H(+)(out). It catalyses the reaction a plastoquinone + NADPH + (n+1) H(+)(in) = a plastoquinol + NADP(+) + n H(+)(out). Functionally, NDH shuttles electrons from NAD(P)H:plastoquinone, via FMN and iron-sulfur (Fe-S) centers, to quinones in the photosynthetic chain and possibly in a chloroplast respiratory chain. The immediate electron acceptor for the enzyme in this species is believed to be plastoquinone. Couples the redox reaction to proton translocation, and thus conserves the redox energy in a proton gradient. In Nicotiana tabacum (Common tobacco), this protein is NAD(P)H-quinone oxidoreductase subunit 6, chloroplastic (ndhG).